The chain runs to 160 residues: MVIGRKAGIIIYVMHALLLLLLSFTFALEPLSEWWSKAKEVCLYGKYKNYDGTLRDIKPFCCKVERVEVEPIKGLLKGKFGLKESLKVIASCNGAFYGVMSYDGTILAVGGKKGIVKETPSGVMEVEDEKTIHFVVCRSGASLEGCYGEVFAEGYIIKKK.

An N-terminal signal peptide occupies residues 1–27 (MVIGRKAGIIIYVMHALLLLLLSFTFA).

This is an uncharacterized protein from Aquifex aeolicus (strain VF5).